Reading from the N-terminus, the 146-residue chain is ATP synthase epsilon chain (146 aa).

The interval 102-122 (QSAKKRAEQHMQEAKEKHNER) is disordered.

The protein belongs to the ATPase epsilon chain family. In terms of assembly, F-type ATPases have 2 components, CF(1) - the catalytic core - and CF(0) - the membrane proton channel. CF(1) has five subunits: alpha(3), beta(3), gamma(1), delta(1), epsilon(1). CF(0) has three main subunits: a, b and c.

The protein localises to the cell membrane. Produces ATP from ADP in the presence of a proton gradient across the membrane. The chain is ATP synthase epsilon chain from Lactobacillus gasseri (strain ATCC 33323 / DSM 20243 / BCRC 14619 / CIP 102991 / JCM 1131 / KCTC 3163 / NCIMB 11718 / NCTC 13722 / AM63).